A 308-amino-acid polypeptide reads, in one-letter code: MSIRIHPQEQIDAKSRSGALGPIAPLLLPNLQRLYSQRAERLRMLADGHPLTDYLCFAATLADAQQQALFDNPLTLDLAPVVANAAANGTPPLATQTFARTPHWQRLLLAIIAELRPQAPVHVLPVLEGLEKCAAGEREALASALLAGDYAAVGSDRALFLWAALSLYWAQMASQLPGRAQAEYGEQRHVCPVCGSMPVSSVVHIGGSNGLRYLHCSLCESEWHMVRVKCSNCEESRDLSYWSLESEQAAVKAESCGDCGSYLKILYQEKDSGVDAVADDLATLLLDAKMEEAGFARSSLNPFLFPGE.

This sequence belongs to the FdhE family.

Its subcellular location is the cytoplasm. Functionally, necessary for formate dehydrogenase activity. This Edwardsiella ictaluri (strain 93-146) protein is Protein FdhE homolog.